Consider the following 397-residue polypeptide: Flavohemoprotein (397 aa).

The Globin domain occupies S4 to A140. H87 contributes to the heme b binding site. Catalysis depends on charge relay system residues Y97 and E139. A reductase region spans residues G151 to A397. The region spanning I154–P258 is the FAD-binding FR-type domain. FAD is bound by residues Y192 and R207–S210. G271 to P276 is an NADP(+) binding site. F387 to P390 provides a ligand contact to FAD.

Belongs to the globin family. Two-domain flavohemoproteins subfamily. The protein in the C-terminal section; belongs to the flavoprotein pyridine nucleotide cytochrome reductase family. Heme b is required as a cofactor. The cofactor is FAD.

The catalysed reaction is 2 nitric oxide + NADPH + 2 O2 = 2 nitrate + NADP(+) + H(+). It catalyses the reaction 2 nitric oxide + NADH + 2 O2 = 2 nitrate + NAD(+) + H(+). In terms of biological role, is involved in NO detoxification in an aerobic process, termed nitric oxide dioxygenase (NOD) reaction that utilizes O(2) and NAD(P)H to convert NO to nitrate, which protects the bacterium from various noxious nitrogen compounds. Therefore, plays a central role in the inducible response to nitrosative stress. The polypeptide is Flavohemoprotein (Xylella fastidiosa (strain 9a5c)).